Consider the following 177-residue polypeptide: MLDAFSRVISNADAKAAYVGGSDLQALRTFISDGNKRLDAVNYIVSNSSCIVSDAISGMICENPGLITPGGNCYTNRRMAACLRDGEIILRYISYALLAGDSSVLEDRCLNGLKETYIALGVPTNSTVRAVSIMKAAVGAFISNTASQRKGEVIEGDCSALAAEIASYCDRISAAVS.

2 residues coordinate (2R,3E)-phycoerythrobilin: Asn35 and Asp39. The phycourobilin site is built by Cys50, Asp54, and Cys61. (2R,3E)-phycoerythrobilin-binding positions include Asn72, 77-78, Cys82, and 84-85; these read RR and RD. Asn72 is modified (N4-methylasparagine). 147–148 serves as a coordination point for phycourobilin; that stretch reads SQ. (2R,3E)-phycoerythrobilin-binding residues include Ile154 and Cys158.

Belongs to the phycobiliprotein family. As to quaternary structure, heterododecamer of 6 alpha and 6 beta chains. The basic functional unit of phycobiliproteins is a ring-shaped hexamer formed from two back-to-back trimers contacting via the alpha chain subunits. The trimers are composed of alpha/beta subunit heterodimers arranged around a three-fold axis of symmetry. The phycoerythrins also contain a gamma subunit which is located in the center of the hexamer. Contains two covalently linked phycoerythrobilin chromophores and one covalently linked phycourobilin chromophore.

The protein localises to the plastid. Its subcellular location is the chloroplast thylakoid membrane. Light-harvesting photosynthetic tetrapyrrole chromophore-protein from the phycobiliprotein complex. This is R-phycoerythrin beta chain (rpeB) from Agarophyton chilense (Red seaweed).